Reading from the N-terminus, the 255-residue chain is tRNA pseudouridine synthase A (255 aa).

Asp-52 functions as the Nucleophile in the catalytic mechanism. Tyr-111 is a binding site for substrate.

The protein belongs to the tRNA pseudouridine synthase TruA family. In terms of assembly, homodimer.

The enzyme catalyses uridine(38/39/40) in tRNA = pseudouridine(38/39/40) in tRNA. In terms of biological role, formation of pseudouridine at positions 38, 39 and 40 in the anticodon stem and loop of transfer RNAs. The chain is tRNA pseudouridine synthase A from Cereibacter sphaeroides (strain ATCC 17029 / ATH 2.4.9) (Rhodobacter sphaeroides).